A 144-amino-acid chain; its full sequence is 3-dehydroquinate dehydratase (144 aa).

Catalysis depends on tyrosine 24, which acts as the Proton acceptor. Asparagine 76, histidine 82, and aspartate 89 together coordinate substrate. The active-site Proton donor is histidine 102. Substrate contacts are provided by residues 103-104 and arginine 113; that span reads LS.

Belongs to the type-II 3-dehydroquinase family. As to quaternary structure, homododecamer.

It catalyses the reaction 3-dehydroquinate = 3-dehydroshikimate + H2O. It functions in the pathway metabolic intermediate biosynthesis; chorismate biosynthesis; chorismate from D-erythrose 4-phosphate and phosphoenolpyruvate: step 3/7. Catalyzes a trans-dehydration via an enolate intermediate. The sequence is that of 3-dehydroquinate dehydratase from Bordetella petrii (strain ATCC BAA-461 / DSM 12804 / CCUG 43448).